We begin with the raw amino-acid sequence, 480 residues long: Trigger factor (480 aa).

Residues 169–264 (GDIAVVDFKG…LKELKEKELP (96 aa)) enclose the PPIase FKBP-type domain. The disordered stretch occupies residues 441-480 (PEGSLSPAEETEAAESDADADVSQTEQENSEPSTTEVTEG). Residues 449 to 460 (EETEAAESDADA) show a composition bias toward acidic residues. The segment covering 462–480 (VSQTEQENSEPSTTEVTEG) has biased composition (polar residues).

It belongs to the FKBP-type PPIase family. Tig subfamily.

It is found in the cytoplasm. It carries out the reaction [protein]-peptidylproline (omega=180) = [protein]-peptidylproline (omega=0). In terms of biological role, involved in protein export. Acts as a chaperone by maintaining the newly synthesized protein in an open conformation. Functions as a peptidyl-prolyl cis-trans isomerase. This Nostoc punctiforme (strain ATCC 29133 / PCC 73102) protein is Trigger factor.